We begin with the raw amino-acid sequence, 251 residues long: SPbeta prophage-derived putative antirepressor protein YoqD (251 aa).

The protein is SPbeta prophage-derived putative antirepressor protein YoqD (yoqD) of Bacillus subtilis (strain 168).